A 265-amino-acid chain; its full sequence is 4-hydroxy-tetrahydrodipicolinate reductase (265 aa).

Residues 7-12, D33, 96-98, and 120-123 contribute to the NAD(+) site; these read GASGRM, GTT, and AANM. H153 serves as the catalytic Proton donor/acceptor. (S)-2,3,4,5-tetrahydrodipicolinate is bound at residue H154. K157 functions as the Proton donor in the catalytic mechanism. 163-164 is a binding site for (S)-2,3,4,5-tetrahydrodipicolinate; it reads GT.

It belongs to the DapB family.

It is found in the cytoplasm. It carries out the reaction (S)-2,3,4,5-tetrahydrodipicolinate + NAD(+) + H2O = (2S,4S)-4-hydroxy-2,3,4,5-tetrahydrodipicolinate + NADH + H(+). The catalysed reaction is (S)-2,3,4,5-tetrahydrodipicolinate + NADP(+) + H2O = (2S,4S)-4-hydroxy-2,3,4,5-tetrahydrodipicolinate + NADPH + H(+). The protein operates within amino-acid biosynthesis; L-lysine biosynthesis via DAP pathway; (S)-tetrahydrodipicolinate from L-aspartate: step 4/4. In terms of biological role, catalyzes the conversion of 4-hydroxy-tetrahydrodipicolinate (HTPA) to tetrahydrodipicolinate. The protein is 4-hydroxy-tetrahydrodipicolinate reductase of Cupriavidus metallidurans (strain ATCC 43123 / DSM 2839 / NBRC 102507 / CH34) (Ralstonia metallidurans).